Reading from the N-terminus, the 126-residue chain is Glycine cleavage system H protein (126 aa).

The Lipoyl-binding domain occupies 24–106; sequence TITVGITDHA…YGEGWFFRMK (83 aa). Lys-65 is subject to N6-lipoyllysine.

It belongs to the GcvH family. In terms of assembly, the glycine cleavage system is composed of four proteins: P, T, L and H. Requires (R)-lipoate as cofactor.

The glycine cleavage system catalyzes the degradation of glycine. The H protein shuttles the methylamine group of glycine from the P protein to the T protein. This is Glycine cleavage system H protein from Psychrobacter arcticus (strain DSM 17307 / VKM B-2377 / 273-4).